Here is a 917-residue protein sequence, read N- to C-terminus: Protein translocase subunit SecA 1 (917 aa).

Residues Gln-87, 105-109, and Asp-507 contribute to the ATP site; that span reads GEGKT. The segment at 866–917 is disordered; sequence EKSPESIGEDIEGREHPQKHQPFVRQGEKIGRNDPCPCGSGKKYKQCHGKLN. 4 residues coordinate Zn(2+): Cys-901, Cys-903, Cys-912, and His-913. The span at 907–917 shows a compositional bias: basic residues; sequence KKYKQCHGKLN.

It belongs to the SecA family. In terms of assembly, monomer and homodimer. Part of the essential Sec protein translocation apparatus which comprises SecA, SecYEG and auxiliary proteins SecDF-YajC and YidC. Zn(2+) serves as cofactor.

Its subcellular location is the cell inner membrane. It localises to the cytoplasm. It catalyses the reaction ATP + H2O + cellular proteinSide 1 = ADP + phosphate + cellular proteinSide 2.. In terms of biological role, part of the Sec protein translocase complex. Interacts with the SecYEG preprotein conducting channel. Has a central role in coupling the hydrolysis of ATP to the transfer of proteins into and across the cell membrane, serving both as a receptor for the preprotein-SecB complex and as an ATP-driven molecular motor driving the stepwise translocation of polypeptide chains across the membrane. The sequence is that of Protein translocase subunit SecA 1 from Nitrosospira multiformis (strain ATCC 25196 / NCIMB 11849 / C 71).